A 166-amino-acid polypeptide reads, in one-letter code: ATP synthase subunit b 1 (166 aa).

The chain crosses the membrane as a helical span at residues 7–29; that stretch reads FWTALAFVLFFVIFGRKLWVAIT.

Belongs to the ATPase B chain family. As to quaternary structure, F-type ATPases have 2 components, F(1) - the catalytic core - and F(0) - the membrane proton channel. F(1) has five subunits: alpha(3), beta(3), gamma(1), delta(1), epsilon(1). F(0) has three main subunits: a(1), b(2) and c(10-14). The alpha and beta chains form an alternating ring which encloses part of the gamma chain. F(1) is attached to F(0) by a central stalk formed by the gamma and epsilon chains, while a peripheral stalk is formed by the delta and b chains.

It localises to the cell inner membrane. In terms of biological role, f(1)F(0) ATP synthase produces ATP from ADP in the presence of a proton or sodium gradient. F-type ATPases consist of two structural domains, F(1) containing the extramembraneous catalytic core and F(0) containing the membrane proton channel, linked together by a central stalk and a peripheral stalk. During catalysis, ATP synthesis in the catalytic domain of F(1) is coupled via a rotary mechanism of the central stalk subunits to proton translocation. Component of the F(0) channel, it forms part of the peripheral stalk, linking F(1) to F(0). In Gluconobacter oxydans (strain 621H) (Gluconobacter suboxydans), this protein is ATP synthase subunit b 1.